The primary structure comprises 932 residues: 3-hydroxy-3-methylglutaryl-coenzyme A reductase (932 aa).

6 helical membrane passes run 20–40 (VIVC…FTGL), 59–79 (LSSD…YLYL), 92–112 (ILGI…SAVI), 113–133 (HLFG…LLLI), 162–182 (MAIL…VISI), and 193–213 (VFCC…MTFF). The N-linked (GlcNAc...) asparagine glycan is linked to Asn-279. Residues 322-342 (ILTAILATVLASHYIFFSDLA) form a helical membrane-spanning segment. The tract at residues 343-467 (TYPEKRVSIM…APRPMPELLE (125 aa)) is linker. Basic and acidic residues predominate over residues 357-367 (VVNPGSDHEDA). The segment at 357–442 (VVNPGSDHED…SGSEDEEEEV (86 aa)) is disordered. Positions 374–403 (GTLSSSPSTSDVRVIESMTSRTQACQTDPV) are enriched in polar residues. Over residues 406 to 421 (SPRNSRSSSPVSSHSV) the composition is skewed to low complexity. Residues 468–932 (ILNVGKGPNA…APGTCTANAS (465 aa)) form a catalytic region. Residues Glu-575, Lys-707, and Asp-783 each act as charge relay system in the active site. N-linked (GlcNAc...) asparagine glycosylation is present at Asn-850. His-882 acts as the Proton donor in catalysis. Asn-886 carries N-linked (GlcNAc...) asparagine glycosylation. Residue Ser-888 is modified to Phosphoserine; by AMPK.

It belongs to the HMG-CoA reductase family.

It localises to the endoplasmic reticulum membrane. The enzyme catalyses (R)-mevalonate + 2 NADP(+) + CoA = (3S)-3-hydroxy-3-methylglutaryl-CoA + 2 NADPH + 2 H(+). The protein operates within metabolic intermediate biosynthesis; (R)-mevalonate biosynthesis; (R)-mevalonate from acetyl-CoA: step 3/3. In terms of biological role, this transmembrane glycoprotein is involved in the control of cholesterol biosynthesis. It is the rate-limiting enzyme of sterol biosynthesis. This Strongylocentrotus purpuratus (Purple sea urchin) protein is 3-hydroxy-3-methylglutaryl-coenzyme A reductase (HMGCR).